The following is a 217-amino-acid chain: Small ribosomal subunit protein uS3 (217 aa).

Residues 38–106 (IRKFINKELA…QVHINIIEIK (69 aa)) enclose the KH type-2 domain.

Belongs to the universal ribosomal protein uS3 family. As to quaternary structure, part of the 30S ribosomal subunit. Forms a tight complex with proteins S10 and S14.

Its function is as follows. Binds the lower part of the 30S subunit head. Binds mRNA in the 70S ribosome, positioning it for translation. This Streptococcus equi subsp. equi (strain 4047) protein is Small ribosomal subunit protein uS3.